The following is a 284-amino-acid chain: Orotidine 5'-phosphate decarboxylase (284 aa).

K95 functions as the Proton donor in the catalytic mechanism.

It belongs to the OMP decarboxylase family. Type 2 subfamily.

The enzyme catalyses orotidine 5'-phosphate + H(+) = UMP + CO2. It participates in pyrimidine metabolism; UMP biosynthesis via de novo pathway; UMP from orotate: step 2/2. The polypeptide is Orotidine 5'-phosphate decarboxylase (Leptothrix cholodnii (strain ATCC 51168 / LMG 8142 / SP-6) (Leptothrix discophora (strain SP-6))).